Here is a 611-residue protein sequence, read N- to C-terminus: tRNA uridine 5-carboxymethylaminomethyl modification enzyme MnmG (611 aa).

14-19 (GAGHAG) serves as a coordination point for FAD. 274 to 288 (GPRYCPSIEDKIVKF) contacts NAD(+).

Belongs to the MnmG family. Homodimer. Heterotetramer of two MnmE and two MnmG subunits. It depends on FAD as a cofactor.

Its subcellular location is the cytoplasm. In terms of biological role, NAD-binding protein involved in the addition of a carboxymethylaminomethyl (cmnm) group at the wobble position (U34) of certain tRNAs, forming tRNA-cmnm(5)s(2)U34. The chain is tRNA uridine 5-carboxymethylaminomethyl modification enzyme MnmG from Chlamydia caviae (strain ATCC VR-813 / DSM 19441 / 03DC25 / GPIC) (Chlamydophila caviae).